We begin with the raw amino-acid sequence, 508 residues long: Glycerol kinase (508 aa).

Residue threonine 14 coordinates ADP. Positions 14, 15, and 16 each coordinate ATP. Threonine 14 lines the sn-glycerol 3-phosphate pocket. ADP is bound at residue arginine 18. 3 residues coordinate sn-glycerol 3-phosphate: arginine 84, glutamate 85, and tyrosine 136. Arginine 84, glutamate 85, and tyrosine 136 together coordinate glycerol. Position 232 is a phosphohistidine; by HPr (histidine 232). Aspartate 246 provides a ligand contact to sn-glycerol 3-phosphate. Glycerol is bound by residues aspartate 246 and glutamine 247. Positions 268 and 311 each coordinate ADP. Residues threonine 268, glycine 311, glutamine 315, and glycine 412 each contribute to the ATP site. Residues glycine 412 and asparagine 416 each contribute to the ADP site.

It belongs to the FGGY kinase family. As to quaternary structure, homotetramer and homodimer (in equilibrium). Post-translationally, the phosphoenolpyruvate-dependent sugar phosphotransferase system (PTS), including enzyme I, and histidine-containing protein (HPr) are required for the phosphorylation, which leads to the activation of the enzyme.

The enzyme catalyses glycerol + ATP = sn-glycerol 3-phosphate + ADP + H(+). The protein operates within polyol metabolism; glycerol degradation via glycerol kinase pathway; sn-glycerol 3-phosphate from glycerol: step 1/1. Its activity is regulated as follows. Activated by phosphorylation and inhibited by fructose 1,6-bisphosphate (FBP). Functionally, key enzyme in the regulation of glycerol uptake and metabolism. Catalyzes the phosphorylation of glycerol to yield sn-glycerol 3-phosphate. In Streptococcus pyogenes serotype M18 (strain MGAS8232), this protein is Glycerol kinase.